The sequence spans 280 residues: MKIIETIEEMKKFSEEMREKKKTIGFVPTMGYLHEGHLSLVRRARDENDVVVVSIFVNPTQFGPNEDYERYPRDFERDRKLLEKENVDCIFHPSVEEMYPPDFSTYVEETKLSKHLCGRSRPGHFRGVCTVVTKLFNIVKPHRAYFGQKDAQQFRVLRRMVRDLNMDVEMIECPIVREPDGLAMSSRNVYLSPEERQQALSLYQSLKIAENLYLNGERDAEKIKEEMIKHLSRFDKVKIDYVEIVDEETLEPVEKIDRKVIVAVAAWVGNARLIDNTILG.

30 to 37 (MGYLHEGH) is an ATP binding site. The Proton donor role is filled by His37. (R)-pantoate is bound at residue Gln61. A beta-alanine-binding site is contributed by Gln61. 147–150 (GQKD) serves as a coordination point for ATP. Gln153 serves as a coordination point for (R)-pantoate. Residues Val176 and 184–187 (MSSR) each bind ATP.

This sequence belongs to the pantothenate synthetase family. Homodimer.

It is found in the cytoplasm. It catalyses the reaction (R)-pantoate + beta-alanine + ATP = (R)-pantothenate + AMP + diphosphate + H(+). Its pathway is cofactor biosynthesis; (R)-pantothenate biosynthesis; (R)-pantothenate from (R)-pantoate and beta-alanine: step 1/1. Its function is as follows. Catalyzes the condensation of pantoate with beta-alanine in an ATP-dependent reaction via a pantoyl-adenylate intermediate. The polypeptide is Pantothenate synthetase (Thermotoga petrophila (strain ATCC BAA-488 / DSM 13995 / JCM 10881 / RKU-1)).